Consider the following 262-residue polypeptide: Small ribosomal subunit protein uS2 (262 aa).

Residues 225 to 262 (KQGEQLTEEAKPEDKEDEKGQAEEKEVKEENNSANKEE) are disordered. Basic and acidic residues predominate over residues 232–262 (EEAKPEDKEDEKGQAEEKEVKEENNSANKEE).

Belongs to the universal ribosomal protein uS2 family.

The protein is Small ribosomal subunit protein uS2 of Halothermothrix orenii (strain H 168 / OCM 544 / DSM 9562).